A 218-amino-acid chain; its full sequence is UPF0173 metal-dependent hydrolase Mpal_1063 (218 aa).

The protein belongs to the UPF0173 family.

This is UPF0173 metal-dependent hydrolase Mpal_1063 from Methanosphaerula palustris (strain ATCC BAA-1556 / DSM 19958 / E1-9c).